The following is a 170-amino-acid chain: MARVEL domain-containing protein 1 (170 aa).

The Cytoplasmic portion of the chain corresponds to 1–38 (MEGERPRSDTVTTTVSSHMETISLGGSIAYDRSFLRSP). The MARVEL domain maps to 34 to 167 (FLRSPTGVLL…STYFSFQAWR (134 aa)). Residues 39 to 59 (TGVLLLMEIMFGLLVWALIAG) form a helical membrane-spanning segment. Residues 60–67 (SEYFLFSA) are Extracellular-facing. A helical transmembrane segment spans residues 68-88 (FGWVMFVAVFYWVLSVFFFLL). Over 89-102 (HLTRANTRITKVPW) the chain is Cytoplasmic. Residues 103–123 (SLVGLCFNGSAFVLYLIAAVV) traverse the membrane as a helical segment. Topologically, residues 124 to 145 (EASSVNKDVHQHHNYNSWTASS) are extracellular. A helical membrane pass occupies residues 146–166 (FFAFIVTVCYALSTYFSFQAW). Residues 167–170 (RTKS) are Cytoplasmic-facing.

The protein localises to the membrane. It localises to the nucleus. This Xenopus laevis (African clawed frog) protein is MARVEL domain-containing protein 1 (marveld1).